The sequence spans 163 residues: Ribonuclease H (163 aa).

An RNase H type-1 domain is found at 16–157; sequence TTSPVEIYCD…CDSLARQAIT (142 aa). D25, E63, D85, and D149 together coordinate Mg(2+).

Belongs to the RNase H family. In terms of assembly, monomer. Mg(2+) is required as a cofactor.

Its subcellular location is the cytoplasm. The enzyme catalyses Endonucleolytic cleavage to 5'-phosphomonoester.. In terms of biological role, endonuclease that specifically degrades the RNA of RNA-DNA hybrids. In Pelobacter propionicus (strain DSM 2379 / NBRC 103807 / OttBd1), this protein is Ribonuclease H.